The primary structure comprises 378 residues: Chaperone protein DnaJ (378 aa).

A J domain is found at 4–68 (DFYEILGVSR…ETRARYDRFG (65 aa)). The CR-type zinc-finger motif lies at 136 to 218 (GGEKEIRIPH…CGGAGRKQET (83 aa)). Residues Cys-149, Cys-152, Cys-166, Cys-169, Cys-192, Cys-195, Cys-206, and Cys-209 each contribute to the Zn(2+) site. CXXCXGXG motif repeat units lie at residues 149–156 (CKTCSGSG), 166–173 (CGTCNGTG), 192–199 (CPTCNGEG), and 206–213 (CESCGGAG).

The protein belongs to the DnaJ family. Homodimer. Zn(2+) is required as a cofactor.

It localises to the cytoplasm. In terms of biological role, participates actively in the response to hyperosmotic and heat shock by preventing the aggregation of stress-denatured proteins and by disaggregating proteins, also in an autonomous, DnaK-independent fashion. Unfolded proteins bind initially to DnaJ; upon interaction with the DnaJ-bound protein, DnaK hydrolyzes its bound ATP, resulting in the formation of a stable complex. GrpE releases ADP from DnaK; ATP binding to DnaK triggers the release of the substrate protein, thus completing the reaction cycle. Several rounds of ATP-dependent interactions between DnaJ, DnaK and GrpE are required for fully efficient folding. Also involved, together with DnaK and GrpE, in the DNA replication of plasmids through activation of initiation proteins. This chain is Chaperone protein DnaJ, found in Picosynechococcus sp. (strain ATCC 27264 / PCC 7002 / PR-6) (Agmenellum quadruplicatum).